The primary structure comprises 538 residues: Putative cysteine ligase BshC (538 aa).

Residues 460 to 485 (KINEQIELLERMLKRNIEKKHEVELN) are a coiled coil.

Belongs to the BshC family.

In terms of biological role, involved in bacillithiol (BSH) biosynthesis. May catalyze the last step of the pathway, the addition of cysteine to glucosamine malate (GlcN-Mal) to generate BSH. The chain is Putative cysteine ligase BshC from Bacillus cereus (strain Q1).